A 413-amino-acid chain; its full sequence is Putative zinc finger protein B0310.2 (413 aa).

Disordered stretches follow at residues 130-151 and 259-290; these read PIFS…KRSL and VESD…TGPM. Residues 270–281 show a composition bias toward polar residues; that stretch reads PSPSTGDITENE. 2 consecutive C2H2-type zinc fingers follow at residues 306-330 and 336-358; these read FICM…MFIH and HTCP…KKTH.

It localises to the nucleus. This chain is Putative zinc finger protein B0310.2, found in Caenorhabditis elegans.